We begin with the raw amino-acid sequence, 493 residues long: ATP-dependent rRNA helicase RRP3 (493 aa).

Basic and acidic residues-rich tracts occupy residues 26–42 (ALENQKKMQAASRKDSE) and 51–62 (ERPAKKQAKDEK). The disordered stretch occupies residues 26–68 (ALENQKKMQAASRKDSESDSSDEEVERPAKKQAKDEKVEEPEE). The Q motif signature appears at 73–101 (ESFAQLNLVPELIQACQNLNFTKPTPIQA). Residues 104–276 (IPPALAGSDV…RASLTNPVKC (173 aa)) enclose the Helicase ATP-binding domain. Position 117 to 124 (117 to 124 (AQTGSGKT)) interacts with ATP. The DEAD box motif lies at 223-226 (DEAD). One can recognise a Helicase C-terminal domain in the interval 307–453 (LLNEFIGKTV…NIILTLRDSV (147 aa)). The disordered stretch occupies residues 467–493 (RNKEKQARGKGRRGRMMAKENMDREEK). Over residues 483–493 (MAKENMDREEK) the composition is skewed to basic and acidic residues.

It belongs to the DEAD box helicase family. DDX47/RRP3 subfamily. As to quaternary structure, interacts with the SSU processome.

The protein localises to the nucleus. The enzyme catalyses ATP + H2O = ADP + phosphate + H(+). Its function is as follows. ATP-dependent rRNA helicase required for pre-ribosomal RNA processing. Involved in the maturation of the 35S-pre-rRNA and to its cleavage to mature 18S rRNA. This is ATP-dependent rRNA helicase RRP3 from Candida glabrata (strain ATCC 2001 / BCRC 20586 / JCM 3761 / NBRC 0622 / NRRL Y-65 / CBS 138) (Yeast).